The chain runs to 280 residues: F420-dependent methylenetetrahydromethanopterin dehydrogenase (280 aa).

Belongs to the MTD family.

The catalysed reaction is 5,10-methylenetetrahydromethanopterin + oxidized coenzyme F420-(gamma-L-Glu)(n) + 2 H(+) = 5,10-methenyl-5,6,7,8-tetrahydromethanopterin + reduced coenzyme F420-(gamma-L-Glu)(n). It participates in one-carbon metabolism; methanogenesis from CO(2); 5,10-methylene-5,6,7,8-tetrahydromethanopterin from 5,10-methenyl-5,6,7,8-tetrahydromethanopterin (coenzyme F420 route): step 1/1. Functionally, catalyzes the reversible reduction of methenyl-H(4)MPT(+) to methylene-H(4)MPT. This chain is F420-dependent methylenetetrahydromethanopterin dehydrogenase, found in Methanoculleus marisnigri (strain ATCC 35101 / DSM 1498 / JR1).